The following is a 483-amino-acid chain: NAD-dependent protein deacetylase SRT1 (483 aa).

Positions 27–270 (PELLHKKIEE…MYMMNLRIPP (244 aa)) constitute a Deacetylase sirtuin-type domain. Residues 53-57 (AGIST), 63-65 (DFR), and 114-117 (QNVD) contribute to the NAD(+) site. Catalysis depends on histidine 134, which acts as the Proton acceptor. Positions 142, 145, 167, and 172 each coordinate Zn(2+). NAD(+) is bound by residues 209 to 211 (GTS) and 235 to 237 (NLQ).

This sequence belongs to the sirtuin family. Class IV subfamily. Zn(2+) is required as a cofactor.

Its subcellular location is the nucleus. It catalyses the reaction N(6)-acetyl-L-lysyl-[protein] + NAD(+) + H2O = 2''-O-acetyl-ADP-D-ribose + nicotinamide + L-lysyl-[protein]. In terms of biological role, NAD-dependent protein deacetylase. Has deacetylase activity towards H3K9Ac. May have a function in the safeguard against genome instability and DNA damage to ensure plant cell growth. May negatively regulate metabolic signal transduction involving methanol and jasmonates during leaf senescence. Required for histone H3K9Ac deacetylation and repression of AP2-1/RSR1 and amylase genes during early seed development. Functions as an epigenetic regulator to repress the expression of glycolytic genes and glycolysis in seedlings. Reduces lysine acetylation of the glycolytic glyceraldehyde-3-phosphate dehydrogenase (GAPDH), which is found to also function as an activator of glycolytic gene expression. In Oryza sativa subsp. indica (Rice), this protein is NAD-dependent protein deacetylase SRT1.